Consider the following 100-residue polypeptide: Urease subunit gamma (100 aa).

It belongs to the urease gamma subunit family. Heterotrimer of UreA (gamma), UreB (beta) and UreC (alpha) subunits. Three heterotrimers associate to form the active enzyme.

It localises to the cytoplasm. The enzyme catalyses urea + 2 H2O + H(+) = hydrogencarbonate + 2 NH4(+). Its pathway is nitrogen metabolism; urea degradation; CO(2) and NH(3) from urea (urease route): step 1/1. This chain is Urease subunit gamma, found in Paraburkholderia phymatum (strain DSM 17167 / CIP 108236 / LMG 21445 / STM815) (Burkholderia phymatum).